The primary structure comprises 157 residues: 6,7-dimethyl-8-ribityllumazine synthase (157 aa).

5-amino-6-(D-ribitylamino)uracil-binding positions include Phe-23, 57–59 (AFE), and 81–83 (AVI). 86-87 (ST) serves as a coordination point for (2S)-2-hydroxy-3-oxobutyl phosphate. Catalysis depends on His-89, which acts as the Proton donor. Phe-114 is a binding site for 5-amino-6-(D-ribitylamino)uracil. Arg-128 is a binding site for (2S)-2-hydroxy-3-oxobutyl phosphate.

This sequence belongs to the DMRL synthase family.

The enzyme catalyses (2S)-2-hydroxy-3-oxobutyl phosphate + 5-amino-6-(D-ribitylamino)uracil = 6,7-dimethyl-8-(1-D-ribityl)lumazine + phosphate + 2 H2O + H(+). It participates in cofactor biosynthesis; riboflavin biosynthesis; riboflavin from 2-hydroxy-3-oxobutyl phosphate and 5-amino-6-(D-ribitylamino)uracil: step 1/2. In terms of biological role, catalyzes the formation of 6,7-dimethyl-8-ribityllumazine by condensation of 5-amino-6-(D-ribitylamino)uracil with 3,4-dihydroxy-2-butanone 4-phosphate. This is the penultimate step in the biosynthesis of riboflavin. This is 6,7-dimethyl-8-ribityllumazine synthase from Desulfosudis oleivorans (strain DSM 6200 / JCM 39069 / Hxd3) (Desulfococcus oleovorans).